An 83-amino-acid chain; its full sequence is MVMLIKCFLVTEKSVAELEKNVLTAIVDMRARKEHIKKEIEKLFNVEVERVNTLITPKGEKKAYIKLKPDYSAEEILSKLGVF.

This sequence belongs to the universal ribosomal protein uL23 family. Part of the 50S ribosomal subunit. Contacts protein L29.

Binds to 23S rRNA. One of the proteins that surrounds the polypeptide exit tunnel on the outside of the ribosome. The sequence is that of Large ribosomal subunit protein uL23 from Archaeoglobus fulgidus (strain ATCC 49558 / DSM 4304 / JCM 9628 / NBRC 100126 / VC-16).